The chain runs to 102 residues: Protein RnfH (102 aa).

Belongs to the UPF0125 (RnfH) family.

The chain is Protein RnfH from Haemophilus influenzae (strain PittEE).